The primary structure comprises 252 residues: Probable transcriptional regulatory protein THA_1246 (252 aa).

The protein belongs to the TACO1 family.

It localises to the cytoplasm. This is Probable transcriptional regulatory protein THA_1246 from Thermosipho africanus (strain TCF52B).